Here is a 184-residue protein sequence, read N- to C-terminus: Ribosome-recycling factor (184 aa).

It belongs to the RRF family.

Its subcellular location is the cytoplasm. Responsible for the release of ribosomes from messenger RNA at the termination of protein biosynthesis. May increase the efficiency of translation by recycling ribosomes from one round of translation to another. The protein is Ribosome-recycling factor of Clostridium botulinum (strain Okra / Type B1).